The chain runs to 418 residues: Serine hydroxymethyltransferase (418 aa).

Residues leucine 121 and 125-127 (GHL) contribute to the (6S)-5,6,7,8-tetrahydrofolate site. Lysine 230 carries the N6-(pyridoxal phosphate)lysine modification. 355–357 (SPF) contacts (6S)-5,6,7,8-tetrahydrofolate.

This sequence belongs to the SHMT family. Homodimer. Pyridoxal 5'-phosphate is required as a cofactor.

The protein localises to the cytoplasm. It catalyses the reaction (6R)-5,10-methylene-5,6,7,8-tetrahydrofolate + glycine + H2O = (6S)-5,6,7,8-tetrahydrofolate + L-serine. It functions in the pathway one-carbon metabolism; tetrahydrofolate interconversion. The protein operates within amino-acid biosynthesis; glycine biosynthesis; glycine from L-serine: step 1/1. Its function is as follows. Catalyzes the reversible interconversion of serine and glycine with tetrahydrofolate (THF) serving as the one-carbon carrier. This reaction serves as the major source of one-carbon groups required for the biosynthesis of purines, thymidylate, methionine, and other important biomolecules. Also exhibits THF-independent aldolase activity toward beta-hydroxyamino acids, producing glycine and aldehydes, via a retro-aldol mechanism. This Streptococcus agalactiae serotype III (strain NEM316) protein is Serine hydroxymethyltransferase.